Consider the following 425-residue polypeptide: Serine--tRNA ligase (425 aa).

230-232 (TSE) provides a ligand contact to L-serine. Residues 261-263 (RRE) and Val277 contribute to the ATP site. Residue Glu284 participates in L-serine binding. 348–351 (ELTS) serves as a coordination point for ATP. Thr382 contributes to the L-serine binding site.

The protein belongs to the class-II aminoacyl-tRNA synthetase family. Type-1 seryl-tRNA synthetase subfamily. In terms of assembly, homodimer. The tRNA molecule binds across the dimer.

The protein localises to the cytoplasm. The enzyme catalyses tRNA(Ser) + L-serine + ATP = L-seryl-tRNA(Ser) + AMP + diphosphate + H(+). It carries out the reaction tRNA(Sec) + L-serine + ATP = L-seryl-tRNA(Sec) + AMP + diphosphate + H(+). The protein operates within aminoacyl-tRNA biosynthesis; selenocysteinyl-tRNA(Sec) biosynthesis; L-seryl-tRNA(Sec) from L-serine and tRNA(Sec): step 1/1. Catalyzes the attachment of serine to tRNA(Ser). Is also able to aminoacylate tRNA(Sec) with serine, to form the misacylated tRNA L-seryl-tRNA(Sec), which will be further converted into selenocysteinyl-tRNA(Sec). This Streptomyces coelicolor (strain ATCC BAA-471 / A3(2) / M145) protein is Serine--tRNA ligase.